Reading from the N-terminus, the 254-residue chain is Ribosomal RNA small subunit methyltransferase J (254 aa).

Residues 101–102, 117–118, 153–154, and Asp-171 contribute to the S-adenosyl-L-methionine site; these read RD, ER, and SS.

It belongs to the methyltransferase superfamily. RsmJ family.

The protein localises to the cytoplasm. The enzyme catalyses guanosine(1516) in 16S rRNA + S-adenosyl-L-methionine = N(2)-methylguanosine(1516) in 16S rRNA + S-adenosyl-L-homocysteine + H(+). Functionally, specifically methylates the guanosine in position 1516 of 16S rRNA. The chain is Ribosomal RNA small subunit methyltransferase J from Enterobacter sp. (strain 638).